We begin with the raw amino-acid sequence, 431 residues long: Na(+)/H(+) antiporter NhaA (431 aa).

The next 11 helical transmembrane spans lie at 33–53 (VGGA…NSPW), 74–94 (LSIS…VVGV), 112–132 (ALPI…FVGV), 144–164 (GWAI…AVIA), 173–193 (IFLL…IAVF), 197–217 (QLSF…GLAV), 225–245 (FLLL…GVHA), 279–299 (FAVP…LSGF), 311–331 (VIAG…YVLA), 347–367 (VLGL…IGEL), and 379–399 (AKIA…VVLL).

The protein belongs to the NhaA Na(+)/H(+) (TC 2.A.33) antiporter family.

It is found in the cell membrane. It carries out the reaction Na(+)(in) + 2 H(+)(out) = Na(+)(out) + 2 H(+)(in). Na(+)/H(+) antiporter that extrudes sodium in exchange for external protons. In Mycolicibacterium smegmatis (strain ATCC 700084 / mc(2)155) (Mycobacterium smegmatis), this protein is Na(+)/H(+) antiporter NhaA.